The following is a 571-amino-acid chain: Septation ring formation regulator EzrA (571 aa).

Residues 1 to 3 (MYY) are Extracellular-facing. Residues 4 to 22 (MLIGFIIVVIAVISAGYIL) traverse the membrane as a helical segment. Residues 23–571 (KRKHYQRINE…ESKVSVDDIE (549 aa)) lie on the Cytoplasmic side of the membrane. Coiled coils occupy residues 170–215 (EAKL…QMER), 248–299 (LAQM…TLEH), 326–374 (DALA…ASGE), 400–437 (NFAEELRSLRKDELEARDDAERMRRAIITLDRKMERER), and 478–529 (RIAE…ENHF).

It belongs to the EzrA family.

It is found in the cell membrane. Its function is as follows. Negative regulator of FtsZ ring formation; modulates the frequency and position of FtsZ ring formation. Inhibits FtsZ ring formation at polar sites. Interacts either with FtsZ or with one of its binding partners to promote depolymerization. The chain is Septation ring formation regulator EzrA from Listeria innocua serovar 6a (strain ATCC BAA-680 / CLIP 11262).